Consider the following 413-residue polypeptide: Histidine--tRNA ligase (413 aa).

The protein belongs to the class-II aminoacyl-tRNA synthetase family. As to quaternary structure, homodimer.

It is found in the cytoplasm. The enzyme catalyses tRNA(His) + L-histidine + ATP = L-histidyl-tRNA(His) + AMP + diphosphate + H(+). The protein is Histidine--tRNA ligase of Wolbachia sp. subsp. Brugia malayi (strain TRS).